The following is a 1058-amino-acid chain: Carbamoyl phosphate synthase large chain (1058 aa).

Positions 1–401 are carboxyphosphate synthetic domain; that stretch reads MPKRKDIQKI…SLLKACRSLE (401 aa). Residues Arg-129, Arg-169, Gly-175, Gly-176, Arg-208, Ile-210, Glu-215, Gly-241, Ile-242, His-243, Gln-284, and Glu-298 each contribute to the ATP site. The ATP-grasp 1 domain maps to 133–327; it reads KQLMQELDQP…IAKLAAKIAV (195 aa). Residues Gln-284, Glu-298, and Asn-300 each coordinate Mg(2+). The Mn(2+) site is built by Gln-284, Glu-298, and Asn-300. The oligomerization domain stretch occupies residues 402–546; sequence IGVCHNEMTS…YSTYELENES (145 aa). Positions 547–929 are carbamoyl phosphate synthetic domain; the sequence is VQSNKESILV…ALYKAFEANN (383 aa). One can recognise an ATP-grasp 2 domain in the interval 671–861; sequence EKALKELGIP…MAQIATKLIL (191 aa). Residues Arg-707, Ser-746, Ile-748, Glu-752, Gly-777, Val-778, His-779, Ser-780, Gln-820, and Glu-832 each coordinate ATP. Mg(2+) contacts are provided by Gln-820, Glu-832, and Asn-834. Gln-820, Glu-832, and Asn-834 together coordinate Mn(2+). In terms of domain architecture, MGS-like spans 930–1058; that stretch reads SHLSEFGQIV…ESRCFNIEAI (129 aa). The segment at 930–1058 is allosteric domain; that stretch reads SHLSEFGQIV…ESRCFNIEAI (129 aa).

The protein belongs to the CarB family. As to quaternary structure, composed of two chains; the small (or glutamine) chain promotes the hydrolysis of glutamine to ammonia, which is used by the large (or ammonia) chain to synthesize carbamoyl phosphate. Tetramer of heterodimers (alpha,beta)4. Mg(2+) serves as cofactor. Mn(2+) is required as a cofactor.

It carries out the reaction hydrogencarbonate + L-glutamine + 2 ATP + H2O = carbamoyl phosphate + L-glutamate + 2 ADP + phosphate + 2 H(+). The catalysed reaction is hydrogencarbonate + NH4(+) + 2 ATP = carbamoyl phosphate + 2 ADP + phosphate + 2 H(+). It functions in the pathway amino-acid biosynthesis; L-arginine biosynthesis; carbamoyl phosphate from bicarbonate: step 1/1. Its pathway is pyrimidine metabolism; UMP biosynthesis via de novo pathway; (S)-dihydroorotate from bicarbonate: step 1/3. Its function is as follows. Large subunit of the glutamine-dependent carbamoyl phosphate synthetase (CPSase). CPSase catalyzes the formation of carbamoyl phosphate from the ammonia moiety of glutamine, carbonate, and phosphate donated by ATP, constituting the first step of 2 biosynthetic pathways, one leading to arginine and/or urea and the other to pyrimidine nucleotides. The large subunit (synthetase) binds the substrates ammonia (free or transferred from glutamine from the small subunit), hydrogencarbonate and ATP and carries out an ATP-coupled ligase reaction, activating hydrogencarbonate by forming carboxy phosphate which reacts with ammonia to form carbamoyl phosphate. This Streptococcus pyogenes serotype M49 (strain NZ131) protein is Carbamoyl phosphate synthase large chain.